A 302-amino-acid chain; its full sequence is uncharacterized protein (302 aa).

An N-terminal signal peptide occupies residues M1–A28.

This is an uncharacterized protein from Rickettsia prowazekii (strain Madrid E).